The chain runs to 574 residues: E3 ubiquitin-protein ligase NEURL1 (574 aa).

The span at 1–18 shows a compositional bias: polar residues; it reads MGNNFSSVSSLQRGNPSR. The disordered stretch occupies residues 1–53; sequence MGNNFSSVSSLQRGNPSRASRGHPQNLKDSIGGSFPVPSHRCHHKQKHCPPTL. A lipid anchor (N-myristoyl glycine) is attached at G2. 2 consecutive NHR domains span residues 61–217 and 292–447; these read TPLL…QLLD and GDLR…RILG. An RING-type zinc finger spans residues 520–560; sequence ECTICYEHAVDTVIYTCGHMCLCYSCGLRLKKALHACCPIC.

As to quaternary structure, interacts with CPEB3 (via N-terminal domain); the interaction increases CPEB3 ubiquitination. Interacts with DLL1. Myristoylation is a determinant of membrane targeting. Expressed in CA1 pyramidal neurons (at protein level). Expressed throughout the adult forebrain, including the cerebral cortex, amygdala, striatum, and CA1 area of the hippocampus. Expressed in sensory neurons of the olfactory epithelium, the vomeronasal organ, mammary gland and skeletal muscle.

Its subcellular location is the cytoplasm. The protein resides in the perinuclear region. The protein localises to the cell membrane. It localises to the perikaryon. It is found in the cell projection. Its subcellular location is the dendrite. The protein resides in the postsynaptic density. It carries out the reaction S-ubiquitinyl-[E2 ubiquitin-conjugating enzyme]-L-cysteine + [acceptor protein]-L-lysine = [E2 ubiquitin-conjugating enzyme]-L-cysteine + N(6)-ubiquitinyl-[acceptor protein]-L-lysine.. Its pathway is protein modification; protein ubiquitination. Functionally, plays a role in hippocampal-dependent synaptic plasticity, learning and memory. Involved in the formation of spines and functional synaptic contacts by modulating the translational activity of the cytoplasmic polyadenylation element-binding protein CPEB3. Promotes ubiquitination of CPEB3, and hence induces CPEB3-dependent mRNA translation activation of glutamate receptor GRIA1 and GRIA2. Can function as an E3 ubiquitin-protein ligase to activate monoubiquitination of JAG1 (in vitro), thereby regulating the Notch pathway. Acts as a tumor suppressor; inhibits malignant cell transformation of medulloblastoma (MB) cells by inhibiting the Notch signaling pathway. This is E3 ubiquitin-protein ligase NEURL1 (Neurl1) from Mus musculus (Mouse).